The primary structure comprises 253 residues: Small ribosomal subunit protein cS22 (253 aa).

A chloroplast-targeting transit peptide spans 1–56 (MATFLTNVVSIKPTIFSFQSESFTPLHTRVNVFSSKPFPSLAGTFSRSSRTRFIPY). RRM domains follow at residues 76–154 (RRVY…ITEK) and 177–253 (YKVY…VNKA).

It belongs to the chloroplast-specific ribosomal protein cS22 family. Component of the chloroplast small ribosomal subunit (SSU). Mature 70S chloroplast ribosomes of higher plants consist of a small (30S) and a large (50S) subunit. The 30S small subunit contains 1 molecule of ribosomal RNA (16S rRNA) and 24 different proteins. The 50S large subunit contains 3 rRNA molecules (23S, 5S and 4.5S rRNA) and 33 different proteins. As to expression, expressed constitutively in roots, stems, flower buds, flowers and leaves.

It localises to the plastid. Its subcellular location is the chloroplast. Its function is as follows. Component of the chloroplast ribosome (chloro-ribosome), a dedicated translation machinery responsible for the synthesis of chloroplast genome-encoded proteins, including proteins of the transcription and translation machinery and components of the photosynthetic apparatus. May have a role in the recruitment of stored chloroplast mRNAs for active protein synthesis. Bind single strand DNA (ssDNA) and RNA in vitro. Exhibits RNA chaperone activity. Negatively regulates resistance responses to abiotic stresses during seed germination (e.g. salt, dehydration, and low temperature) and seedling growth (e.g. salt). The polypeptide is Small ribosomal subunit protein cS22 (Arabidopsis thaliana (Mouse-ear cress)).